Here is a 356-residue protein sequence, read N- to C-terminus: Histidinol-phosphate aminotransferase (356 aa).

N6-(pyridoxal phosphate)lysine is present on lysine 214.

It belongs to the class-II pyridoxal-phosphate-dependent aminotransferase family. Histidinol-phosphate aminotransferase subfamily. Homodimer. Pyridoxal 5'-phosphate serves as cofactor.

The enzyme catalyses L-histidinol phosphate + 2-oxoglutarate = 3-(imidazol-4-yl)-2-oxopropyl phosphate + L-glutamate. It participates in amino-acid biosynthesis; L-histidine biosynthesis; L-histidine from 5-phospho-alpha-D-ribose 1-diphosphate: step 7/9. This Escherichia coli O8 (strain IAI1) protein is Histidinol-phosphate aminotransferase.